The chain runs to 62 residues: Delta-theraphotoxin-Cg1a 1 (62 aa).

The first 21 residues, 1-21, serve as a signal peptide directing secretion; sequence MKTSILFVIFSLALLFALSAA. Residues 22 to 29 constitute a propeptide that is removed on maturation; sequence TEIEETDR. 3 disulfide bridges follow: cysteine 31–cysteine 46, cysteine 38–cysteine 51, and cysteine 45–cysteine 58.

The protein belongs to the neurotoxin 10 (Hwtx-1) family. 33 (Jztx-1) subfamily. In terms of tissue distribution, expressed by the venom gland.

Its subcellular location is the secreted. In terms of biological role, inhibits voltage-gated sodium channels, preferentially subtype Nav1.5/SCN5A (in cardiac myocytes), but also Nav1.6/SCN8A and Nav1.7/SCN9A (TTX-sensitive Nav in rat DRG neurons) and invertebrate Nav (in insect neurons) as well as voltage-gated potassium channels of the subtype Kv2.1/KCNB1. Is suggested to bind to site 3 of the sodium channels and inhibit the inactivation of the activated channels, thereby blocking neuronal transmission. On potassium channels, inhibits activation of channels with an IC(50) of 8.05 uM through a voltage sensor-trapping mechanism. Increases muscle contraction in several assays (mouse phrenic nerve-diaphragm, toad heart, rat vas deferens) and is suggested to act both presynaptically and postsynaptically. Its function is as follows. Moderately inhibits voltage-gated sodium channels and weakly inhibits voltage-gated potassium channel. Inhibits the inactivation of rat Nav1.2/SCN2A (IC(50)=870 nM), rat Nav1.3/SCN3A (IC(50)=845 nM), rat Nav1.4/SCN4A (IC(50)=339 nM), human Nav1.5/SCN5A (IC(50)=335 nM) and human Nav1.7/SCN9A sodium channels (IC(50)=348 nM). The toxin delays the inactivation of sodium channels without affecting the activation and steady-state inactivation kinetics in the physiological range of voltages. Site-directed mutagenesis of the sodium channel indicates that the toxin interacts with site 3 located at the extracellular S3-S4 linker of domain IV. On potassium channels, it inhibits activation of channels with an IC(50) of 8.05 uM through a voltage sensor-trapping mechanism. It increases muscle contraction in several assays (mouse phrenic nerve-diaphragm, toad heart, rat vas deferens) and is suggested to act both presynaptically and postsynaptically. The chain is Delta-theraphotoxin-Cg1a 1 from Chilobrachys guangxiensis (Chinese earth tiger tarantula).